A 266-amino-acid chain; its full sequence is Undecaprenyl-diphosphatase (266 aa).

The next 8 membrane-spanning stretches (helical) occupy residues 1-21 (METFQIILLALIQGLTEFLPI), 39-59 (QGFSFDVAVNTGSLLAVVIYF), 87-107 (WWIILATIPAVIFGFAAKDFI), 111-131 (LRNTTVIASTTIIFGLLLWWA), 149-169 (ALLIGFAQALAIIPGTSRSGA), 183-203 (AAAKFSFLMSVPVGLGAAILV), 218-238 (ALGIGMLVSFLAAYACIYYFL), and 246-266 (MTPFVIYRLILGSVLFALILW).

Belongs to the UppP family.

The protein localises to the cell inner membrane. It carries out the reaction di-trans,octa-cis-undecaprenyl diphosphate + H2O = di-trans,octa-cis-undecaprenyl phosphate + phosphate + H(+). Catalyzes the dephosphorylation of undecaprenyl diphosphate (UPP). Confers resistance to bacitracin. This chain is Undecaprenyl-diphosphatase, found in Shewanella denitrificans (strain OS217 / ATCC BAA-1090 / DSM 15013).